Consider the following 1608-residue polypeptide: Mitogen-activated protein kinase kinase kinase 4 (1608 aa).

A compositionally biased stretch (low complexity) spans 1–23 (MREAAAALVPPPAFAVTPAAAME). Disordered regions lie at residues 1 to 136 (MREA…ENVE) and 429 to 478 (IPSP…RQPI). Pro residues predominate over residues 24–37 (EPPPPPPPPPPPPE). Positions 66 to 76 (SDLEDFSDETN) are enriched in acidic residues. A Phosphoserine modification is found at serine 84. The segment covering 91–101 (QMKRMSTKHQR) has biased composition (basic residues). At serine 431 the chain carries Phosphoserine. Threonine 447 carries the post-translational modification Phosphothreonine. Serine 456 and serine 457 each carry phosphoserine. A compositionally biased stretch (acidic residues) spans 456–466 (SSTDESEEEQI). Threonine 458 is modified (phosphothreonine). A phosphoserine mark is found at serine 461, serine 481, and serine 499. 3 disordered regions span residues 1157 to 1190 (CHSD…GSPA), 1202 to 1231 (ASRP…SVPE), and 1244 to 1274 (FRSL…TRRS). The segment covering 1217–1230 (SISSAHDTRGSSVP) has biased composition (polar residues). Residues serine 1252 and serine 1274 each carry the phosphoserine modification. Positions 1252-1261 (SPTEERDEPA) are enriched in basic and acidic residues. In terms of domain architecture, Protein kinase spans 1343 to 1601 (WQRGNKIGEG…ASQLLDHSFV (259 aa)). Residues 1349-1357 (IGEGQYGKV) and lysine 1372 each bind ATP. Aspartate 1463 functions as the Proton acceptor in the catalytic mechanism.

This sequence belongs to the protein kinase superfamily. STE Ser/Thr protein kinase family. MAP kinase kinase kinase subfamily. As to quaternary structure, monomer and homodimer. Homodimerization enhances kinase activity. Interacts with TRAF4; this promotes homodimerization. Binds both upstream activators and downstream substrates in multimolecular complexes. Interacts with AXIN1 and DIXDC1; interaction with DIXDC1 prevents interaction with AXIN1. Interacts with GADD45 and MAP2K6. Interacts with ZFP36; this interaction enhances the association with SH3KBP1/CIN85. Interacts with SH3KBP1; this interaction enhances the association with ZFP36. Interacts with CDC42. The cofactor is Mg(2+). Expressed at high levels in heart, placenta, skeletal muscle and pancreas, and at lower levels in other tissues.

The protein resides in the cytoplasm. It localises to the perinuclear region. The catalysed reaction is L-seryl-[protein] + ATP = O-phospho-L-seryl-[protein] + ADP + H(+). The enzyme catalyses L-threonyl-[protein] + ATP = O-phospho-L-threonyl-[protein] + ADP + H(+). Its activity is regulated as follows. N-terminal autoinhibitory domain interacts with the C-terminal kinase domain, inhibiting kinase activity, and preventing interaction with its substrate, MAP2K6. The GADD45 proteins activate the kinase by binding to the N-terminal domain. Activated by phosphorylation on Thr-1505. Its function is as follows. Component of a protein kinase signal transduction cascade. Activates the CSBP2, P38 and JNK MAPK pathways, but not the ERK pathway. Specifically phosphorylates and activates MAP2K4 and MAP2K6. This is Mitogen-activated protein kinase kinase kinase 4 (MAP3K4) from Homo sapiens (Human).